Here is a 115-residue protein sequence, read N- to C-terminus: LVLDVDGNPLEVGSEYYIGRAVGFYVVERFSEVDRGDPLSSDVQIDSGLSAYCRSDGFWGVPPSSFRIEKTEGFPNAYKIAYSPPTTSSQQQRYPDLHSGLNLVGLTDDSARVVL.

This sequence belongs to the protease inhibitor I3 (leguminous Kunitz-type inhibitor) family.

Functionally, exhibits Kunitz trypsin protease inhibitor activity. This Selenicereus undatus (Pitahaya) protein is Kunitz-type trypsin inhibitor 1.